The primary structure comprises 263 residues: Small ribosomal subunit protein eS4 (263 aa).

Residues 42–104 (LPLIVFLRNR…TGEHFRLVYD (63 aa)) enclose the S4 RNA-binding domain.

It belongs to the eukaryotic ribosomal protein eS4 family.

This is Small ribosomal subunit protein eS4 (RPS4Y1) from Pongo pygmaeus (Bornean orangutan).